Here is an 887-residue protein sequence, read N- to C-terminus: DNA gyrase subunit A (887 aa).

Positions L35 to L501 constitute a Topo IIA-type catalytic domain. Y123 functions as the O-(5'-phospho-DNA)-tyrosine intermediate in the catalytic mechanism. The GyrA-box motif lies at Q528–G534. Residues K811–G864 form a disordered region. Residues D813 to Q823 are compositionally biased toward acidic residues.

The protein belongs to the type II topoisomerase GyrA/ParC subunit family. In terms of assembly, heterotetramer, composed of two GyrA and two GyrB chains. In the heterotetramer, GyrA contains the active site tyrosine that forms a transient covalent intermediate with DNA, while GyrB binds cofactors and catalyzes ATP hydrolysis.

It is found in the cytoplasm. The enzyme catalyses ATP-dependent breakage, passage and rejoining of double-stranded DNA.. Its function is as follows. A type II topoisomerase that negatively supercoils closed circular double-stranded (ds) DNA in an ATP-dependent manner to modulate DNA topology and maintain chromosomes in an underwound state. Negative supercoiling favors strand separation, and DNA replication, transcription, recombination and repair, all of which involve strand separation. Also able to catalyze the interconversion of other topological isomers of dsDNA rings, including catenanes and knotted rings. Type II topoisomerases break and join 2 DNA strands simultaneously in an ATP-dependent manner. In Staphylococcus aureus (strain COL), this protein is DNA gyrase subunit A.